We begin with the raw amino-acid sequence, 361 residues long: Probable dual-specificity RNA methyltransferase RlmN (361 aa).

Glu91 serves as the catalytic Proton acceptor. Residues 97–329 (QHYGLSVCVT…KKKGVNCVVR (233 aa)) enclose the Radical SAM core domain. Cys104 and Cys340 are disulfide-bonded. [4Fe-4S] cluster contacts are provided by Cys111, Cys115, and Cys118. S-adenosyl-L-methionine is bound by residues 163–164 (GE), Ser195, 218–220 (SLH), and Asn296. The active-site S-methylcysteine intermediate is the Cys340.

It belongs to the radical SAM superfamily. RlmN family. The cofactor is [4Fe-4S] cluster.

Its subcellular location is the cytoplasm. The enzyme catalyses adenosine(2503) in 23S rRNA + 2 reduced [2Fe-2S]-[ferredoxin] + 2 S-adenosyl-L-methionine = 2-methyladenosine(2503) in 23S rRNA + 5'-deoxyadenosine + L-methionine + 2 oxidized [2Fe-2S]-[ferredoxin] + S-adenosyl-L-homocysteine. The catalysed reaction is adenosine(37) in tRNA + 2 reduced [2Fe-2S]-[ferredoxin] + 2 S-adenosyl-L-methionine = 2-methyladenosine(37) in tRNA + 5'-deoxyadenosine + L-methionine + 2 oxidized [2Fe-2S]-[ferredoxin] + S-adenosyl-L-homocysteine. In terms of biological role, specifically methylates position 2 of adenine 2503 in 23S rRNA and position 2 of adenine 37 in tRNAs. This Streptococcus pneumoniae serotype 19F (strain G54) protein is Probable dual-specificity RNA methyltransferase RlmN.